The following is a 151-amino-acid chain: Small ribosomal subunit protein uS15 (151 aa).

Belongs to the universal ribosomal protein uS15 family.

The protein is Small ribosomal subunit protein uS15 (RPS13) of Lumbricus rubellus (Humus earthworm).